Consider the following 66-residue polypeptide: Large ribosomal subunit protein bL35c (66 aa).

Belongs to the bacterial ribosomal protein bL35 family.

Its subcellular location is the plastid. The protein resides in the chloroplast. The protein is Large ribosomal subunit protein bL35c of Gracilaria tenuistipitata var. liui (Red alga).